A 373-amino-acid polypeptide reads, in one-letter code: Probable G-protein coupled receptor 173 (373 aa).

The Extracellular portion of the chain corresponds to 1–26 (MANTTGEPEEVSGALSPPSAVAYVKL). Residue Asn-3 is glycosylated (N-linked (GlcNAc...) asparagine). A helical transmembrane segment spans residues 27–47 (VLLGLIMCVSLAGNAILSLLV). At 48–59 (LKDRALHKAPYY) the chain is on the cytoplasmic side. The chain crosses the membrane as a helical span at residues 60–80 (FLLDLCLADGIRSAVCFPFVL). The Extracellular portion of the chain corresponds to 81–97 (ASVRHGSSWTFSALSCK). The cysteines at positions 96 and 174 are disulfide-linked. A helical membrane pass occupies residues 98–118 (IVAFMAVLFCFHAAFMLFCIS). The Cytoplasmic portion of the chain corresponds to 119–139 (VTRYMAIAHHRFYAKRMTLWT). Residues 140–160 (CAAVICMAWTLSVAMAFPPVF) form a helical membrane-spanning segment. Residues 161-188 (DVGTYKFIREEDQCIFEHRYFKANDTLG) are Extracellular-facing. Residue Asn-184 is glycosylated (N-linked (GlcNAc...) asparagine). Residues 189–209 (FMLMLAVLMAATHAVYGKLLL) form a helical membrane-spanning segment. Over 210–287 (FEYRHRKMKP…VKGEKQLGRM (78 aa)) the chain is Cytoplasmic. Residues 288–308 (FYAITLLFLLLWSPYIVACYW) form a helical membrane-spanning segment. Residues 309–322 (RVFVKACAVPHRYL) lie on the Extracellular side of the membrane. The helical transmembrane segment at 323–343 (ATAVWMSFAQAAVNPIVCFLL) threads the bilayer. The Cytoplasmic portion of the chain corresponds to 344-373 (NKDLKKCLRTHAPCWGTGGAPAPREPYCVM).

This sequence belongs to the G-protein coupled receptor 1 family.

It is found in the cell membrane. Is a receptor for the SMIM20 derived peptides Phoenixin-14 and Phoenixin-20. It mediates the Phoenixin-14 and Phoenixin-20 augmentation of gonadotropin-releasing hormone (GNRH) signaling in the hypothalamus and pituitary gland. In the ovary, it mediates the effects of Phoenixin-14 and Phoenixin-20 induced granulosa cell proliferation during follicular growth. The sequence is that of Probable G-protein coupled receptor 173 (GPR173) from Bos taurus (Bovine).